The chain runs to 432 residues: Amino-acid acetyltransferase (432 aa).

Residues 286 to 425 enclose the N-acetyltransferase domain; sequence ELVREAAIED…ASLYNYQRNS (140 aa).

This sequence belongs to the acetyltransferase family. ArgA subfamily.

It localises to the cytoplasm. It catalyses the reaction L-glutamate + acetyl-CoA = N-acetyl-L-glutamate + CoA + H(+). The protein operates within amino-acid biosynthesis; L-arginine biosynthesis; N(2)-acetyl-L-ornithine from L-glutamate: step 1/4. In Pseudomonas fluorescens (strain Pf0-1), this protein is Amino-acid acetyltransferase.